A 288-amino-acid chain; its full sequence is HTH-type transcriptional regulator CzcR (288 aa).

Positions 1 to 58 (MELRDLQIFQSVADQGSVSSAAKELNYVQSNVTTRIKQLENELKTPLFYRHKRGMTLT) constitute an HTH lysR-type domain. The H-T-H motif DNA-binding region spans 18 to 37 (VSSAAKELNYVQSNVTTRIK).

The protein belongs to the LysR transcriptional regulatory family.

This is HTH-type transcriptional regulator CzcR (czcR) from Bacillus thuringiensis subsp. konkukian (strain 97-27).